The chain runs to 286 residues: D-tagatose-1,6-bisphosphate aldolase subunit KbaY (286 aa).

Aspartate 82 (proton donor) is an active-site residue. Zn(2+)-binding residues include histidine 83 and histidine 180. Glycine 181 provides a ligand contact to dihydroxyacetone phosphate. Position 208 (histidine 208) interacts with Zn(2+). Residues 209-211 (GAS) and 230-233 (NVAT) contribute to the dihydroxyacetone phosphate site.

It belongs to the class II fructose-bisphosphate aldolase family. TagBP aldolase KbaY subfamily. Homotetramer. Forms a complex with KbaZ. Zn(2+) is required as a cofactor.

The enzyme catalyses D-tagatofuranose 1,6-bisphosphate = D-glyceraldehyde 3-phosphate + dihydroxyacetone phosphate. It participates in carbohydrate metabolism; D-tagatose 6-phosphate degradation; D-glyceraldehyde 3-phosphate and glycerone phosphate from D-tagatose 6-phosphate: step 2/2. Catalytic subunit of the tagatose-1,6-bisphosphate aldolase KbaYZ, which catalyzes the reversible aldol condensation of dihydroxyacetone phosphate (DHAP or glycerone-phosphate) with glyceraldehyde 3-phosphate (G3P) to produce tagatose 1,6-bisphosphate (TBP). Requires KbaZ subunit for full activity and stability. The chain is D-tagatose-1,6-bisphosphate aldolase subunit KbaY from Escherichia coli O127:H6 (strain E2348/69 / EPEC).